We begin with the raw amino-acid sequence, 463 residues long: Sugar transporter ERD6-like 7 (463 aa).

12 helical membrane passes run 26-46 (WMVY…GSCA), 69-89 (LFGS…GPIA), 103-123 (AFCV…ALDL), 126-146 (LATG…IAEI), 157-177 (TLNQ…GTLV), 181-201 (VLAL…FFIP), 264-284 (VLIA…GICF), 299-319 (LGMI…APIV), 327-347 (LLLV…VSFY), 357-377 (AVPV…SAGM), 396-416 (VAGG…SYTF), and 426-446 (GTFL…IAIV).

This sequence belongs to the major facilitator superfamily. Sugar transporter (TC 2.A.1.1) family.

It localises to the membrane. In terms of biological role, sugar transporter. This is Sugar transporter ERD6-like 7 from Arabidopsis thaliana (Mouse-ear cress).